The sequence spans 205 residues: MKKTTLKFAALTLLGLSNLALADAASELQMRLAKVDVLSAEFVQTVTSGSGKNVQQGSGKLQIKRPNLFRMETKTPQETQIISDGKTLWFYDPFVQQVTAQWVKNAVNNTPFVLLTSNDNSHWHQYTVTQQSDTFVLKPTLSTSNIKQFDIRVDANGILRNFSTTEKDGQTNLYVLRNITNQTLSDSLFQFKPEKGVEVDDQRKK.

The N-terminal stretch at 1 to 22 (MKKTTLKFAALTLLGLSNLALA) is a signal peptide.

It belongs to the LolA family. In terms of assembly, monomer.

It is found in the periplasm. In terms of biological role, participates in the translocation of lipoproteins from the inner membrane to the outer membrane. Only forms a complex with a lipoprotein if the residue after the N-terminal Cys is not an aspartate (The Asp acts as a targeting signal to indicate that the lipoprotein should stay in the inner membrane). The polypeptide is Outer-membrane lipoprotein carrier protein (Haemophilus influenzae (strain PittEE)).